A 565-amino-acid chain; its full sequence is Effector protease OspD3 (565 aa).

This sequence belongs to the Toxin_15 family.

The protein localises to the secreted. Its function is as follows. Effector protease that disrupts necroptosis in host cells by mediating proteolytic cleavage of host RIPK1 and RIPK3. This chain is Effector protease OspD3, found in Shigella flexneri.